The following is a 62-amino-acid chain: ATP synthase subunit K, mitochondrial (62 aa).

Residues 14 to 30 (HHLAIATIGTVVALVAP) form a helical membrane-spanning segment.

F-type ATP synthases have 2 components, the catalytic core F(1) and the membrane-embedded component F(0), linked together by a central stalk and a peripheral stalk. The central stalk, also called rotor shaft, is often seen as part of F(1). The peripheral stalk is seen as part of F(0). F(0) contains the membrane channel next to the rotor. F-type ATP synthases form dimers but each monomer functions independently in ATP generation. The dimer consists of 18 different polypeptides: ATP1 (subunit alpha, part of F(1), 3 molecules per monomer), ATP2 (subunit beta, part of F(1), 3 molecules per monomer), ATP3 (subunit gamma, part of the central stalk), ATP4 (subunit b, part of the peripheral stalk), ATP5/OSCP (subunit 5/OSCP, part of the peripheral stalk), ATP6 (subunit a, part of the peripheral stalk), ATP7 (subunit d, part of the peripheral stalk), ATP8 (subunit 8, part of the peripheral stalk), OLI1 (subunit c, part of the rotor, 10 molecules per monomer), ATP14 (subunit h, part of the peripheral stalk), ATP15 (subunit epsilon, part of the central stalk), ATP16 (subunit delta, part of the central stalk), ATP17 (subunit f, part of the peripheral stalk), ATP18 (subunit i/j, part of the peripheral stalk). Dimer-specific subunits are ATP19 (subunit k, at interface between monomers), ATP20 (subunit g, at interface between monomers), TIM11 (subunit e, at interface between monomers). Also contains subunit L.

It localises to the mitochondrion inner membrane. In terms of biological role, mitochondrial membrane ATP synthase (F(1)F(0) ATP synthase or Complex V) produces ATP from ADP in the presence of a proton gradient across the membrane which is generated by electron transport complexes of the respiratory chain. F-type ATP synthases consist of two structural domains, F(1) - containing the extramembraneous catalytic core, and F(0) - containing the membrane proton channel, linked together by a central stalk and a peripheral stalk. During catalysis, ATP synthesis in the catalytic domain of F(1) is coupled via a rotary mechanism of the central stalk subunits to proton translocation. Part of the complex F(0) domain. Minor subunit located with subunit a/ATP6 in the membrane. The K chain binds the dimeric form by interacting with the G and E chains. This Pichia angusta (Yeast) protein is ATP synthase subunit K, mitochondrial.